The sequence spans 210 residues: MSTVEAAKPKTEVSPLLKLVLELGPLMVFFFANSRGEWLASRFPVLADLGGPIFIATGLFMAATAAALAVSWMMTRTLPMMPLISGIVVFVFGALTLWLQNDTFIKMKPTIVNTLFGAILLGGLLFGKSLLGYVFHAAFKLDEEGWRKLTVRWGVFFLFLAVLNEVIWRSFSTDFWVAFKVWGTMPITILFTLAQMPLIMKHSVDQENAK.

The next 6 helical transmembrane spans lie at 12-32 (EVSP…FFFA), 53-73 (IFIA…VSWM), 78-98 (LPMM…LTLW), 115-135 (LFGA…GYVF), 153-173 (WGVF…SFST), and 175-195 (FWVA…TLAQ).

Belongs to the YciB family.

The protein localises to the cell inner membrane. Its function is as follows. Plays a role in cell envelope biogenesis, maintenance of cell envelope integrity and membrane homeostasis. In Sinorhizobium medicae (strain WSM419) (Ensifer medicae), this protein is Inner membrane-spanning protein YciB.